We begin with the raw amino-acid sequence, 363 residues long: Adenosine kinase (363 aa).

Ala185, Ile188, and Ala191 together coordinate Mg(2+). The active site involves Asp318.

Belongs to the carbohydrate kinase PfkB family. The cofactor is Mg(2+).

The enzyme catalyses adenosine + ATP = AMP + ADP + H(+). It functions in the pathway purine metabolism; AMP biosynthesis via salvage pathway; AMP from adenosine: step 1/1. Functionally, ATP-dependent phosphorylation of adenosine and other related nucleoside analogs to monophosphate derivatives. It is a key purine metabolic enzyme in the opportunistic parasitic protozoan toxoplasma gondii as it cannot synthesize purines de novo. This is Adenosine kinase (AK) from Toxoplasma gondii.